The following is a 66-amino-acid chain: MPGLQLKKRPLSRYLKDYKHGQTHCSHCHKQLDRMALVFRGQIINKEAIAGMDQPIDDQVWSKLQH.

Functionally, may regulate sigma factor activity. This Yersinia enterocolitica protein is Protein FliZ (fliZ).